The chain runs to 359 residues: Probable D-xylulose reductase A (359 aa).

C47, H72, and E73 together coordinate Zn(2+). 182 to 187 (GAGPVG) contacts NAD(+).

It belongs to the zinc-containing alcohol dehydrogenase family. Zn(2+) serves as cofactor.

It catalyses the reaction xylitol + NAD(+) = D-xylulose + NADH + H(+). Its pathway is carbohydrate degradation; L-arabinose degradation via L-arabinitol; D-xylulose 5-phosphate from L-arabinose (fungal route): step 4/5. Xylitol dehydrogenase which catalyzes the conversion of xylitol to D-xylulose. Xylose is a major component of hemicelluloses such as xylan. Most fungi utilize D-xylose via three enzymatic reactions, xylose reductase (XR), xylitol dehydrogenase (XDH), and xylulokinase, to form xylulose 5-phosphate, which enters pentose phosphate pathway. The polypeptide is Probable D-xylulose reductase A (xdhA) (Emericella nidulans (strain FGSC A4 / ATCC 38163 / CBS 112.46 / NRRL 194 / M139) (Aspergillus nidulans)).